The primary structure comprises 121 residues: Small ribosomal subunit protein bS6 (121 aa).

A disordered region spans residues 94-121 (KAETGPSAVMKRVEKEEARKSSQQETAA). The segment covering 104–115 (KRVEKEEARKSS) has biased composition (basic and acidic residues).

It belongs to the bacterial ribosomal protein bS6 family.

Its function is as follows. Binds together with bS18 to 16S ribosomal RNA. This is Small ribosomal subunit protein bS6 from Leptothrix cholodnii (strain ATCC 51168 / LMG 8142 / SP-6) (Leptothrix discophora (strain SP-6)).